A 901-amino-acid polypeptide reads, in one-letter code: Protein translocase subunit SecA (901 aa).

ATP is bound by residues Gln-85, 103–107 (GEGKT), and Asp-510. Basic and acidic residues predominate over residues 836 to 845 (EEAERARQEM). The segment at 836–901 (EEAERARQEM…HCHGSRVARQ (66 aa)) is disordered. Positions 849–866 (INQNNLPVDENSQTTQNS) are enriched in polar residues. Residues Cys-882, Cys-884, Cys-893, and His-894 each coordinate Zn(2+). Positions 888 to 901 (KKYKHCHGSRVARQ) are enriched in basic residues.

The protein belongs to the SecA family. In terms of assembly, monomer and homodimer. Part of the essential Sec protein translocation apparatus which comprises SecA, SecYEG and auxiliary proteins SecDF-YajC and YidC. It depends on Zn(2+) as a cofactor.

The protein localises to the cell inner membrane. The protein resides in the cytoplasm. It catalyses the reaction ATP + H2O + cellular proteinSide 1 = ADP + phosphate + cellular proteinSide 2.. Its function is as follows. Part of the Sec protein translocase complex. Interacts with the SecYEG preprotein conducting channel. Has a central role in coupling the hydrolysis of ATP to the transfer of proteins into and across the cell membrane, serving both as a receptor for the preprotein-SecB complex and as an ATP-driven molecular motor driving the stepwise translocation of polypeptide chains across the membrane. The sequence is that of Protein translocase subunit SecA from Haemophilus influenzae (strain PittEE).